The sequence spans 452 residues: Adenylyltransferase and sulfurtransferase MOCS3 (452 aa).

Residues G99, D120, 127-131 (SNLHR), K144, and 188-189 (DN) contribute to the ATP site. Residues C230 and C233 each contribute to the Zn(2+) site. Residue C247 is the Glycyl thioester intermediate; for adenylyltransferase activity of the active site. Zn(2+) contacts are provided by C305 and C308. Positions 354-450 (KTKAHLLLDV…WTNQVDQSFP (97 aa)) constitute a Rhodanese domain. The active-site Cysteine persulfide intermediate; for sulfurtransferase activity is C409.

In the N-terminal section; belongs to the HesA/MoeB/ThiF family. UBA4 subfamily. Zn(2+) serves as cofactor.

It localises to the cytoplasm. The protein localises to the cytosol. The enzyme catalyses [molybdopterin-synthase sulfur-carrier protein]-C-terminal Gly-Gly + ATP + H(+) = [molybdopterin-synthase sulfur-carrier protein]-C-terminal Gly-Gly-AMP + diphosphate. It carries out the reaction [molybdopterin-synthase sulfur-carrier protein]-C-terminal Gly-Gly-AMP + S-sulfanyl-L-cysteinyl-[cysteine desulfurase] + AH2 = [molybdopterin-synthase sulfur-carrier protein]-C-terminal-Gly-aminoethanethioate + L-cysteinyl-[cysteine desulfurase] + A + AMP + 2 H(+). Its pathway is tRNA modification; 5-methoxycarbonylmethyl-2-thiouridine-tRNA biosynthesis. It participates in cofactor biosynthesis; molybdopterin biosynthesis. Plays a central role in 2-thiolation of mcm(5)S(2)U at tRNA wobble positions of cytosolic tRNA(Lys), tRNA(Glu) and tRNA(Gln). Also essential during biosynthesis of the molybdenum cofactor. Acts by mediating the C-terminal thiocarboxylation of sulfur carriers URM1 and MOCS2A. Its N-terminus first activates URM1 and MOCS2A as acyl-adenylates (-COAMP), then the persulfide sulfur on the catalytic cysteine is transferred to URM1 and MOCS2A to form thiocarboxylation (-COSH) of their C-terminus. The reaction probably involves hydrogen sulfide that is generated from the persulfide intermediate and that acts as a nucleophile towards URM1 and MOCS2A. Subsequently, a transient disulfide bond is formed. Does not use thiosulfate as sulfur donor; NFS1 probably acting as a sulfur donor for thiocarboxylation reactions. The polypeptide is Adenylyltransferase and sulfurtransferase MOCS3 (Drosophila virilis (Fruit fly)).